A 285-amino-acid chain; its full sequence is MKFRRSGRLVDLTNYLLTHPHELIPLTFFSERYESAKSSISEDLTIIKQTFEQQGIGTLLTVPGAAGGVKYIPKMKQAEAEEFVQTLGQSLANPERILPGGYVYLTDILGKPSVLSKVGKLFASVFAEREIDVVMTVATKGIPLAYAAASYLNVPVVIVRKDNKVTEGSTVSINYVSGSSNRIQTMSLAKRSMKTGSNVLIIDDFMKAGGTINGMINLLDEFNANVAGIGVLVEAEGVDERLVDEYMSLLTLSTINMKEKSIEIQNGNFLRFFKDNLLKNGETES.

Residues 1–73 (MKFRRSGRLV…GAAGGVKYIP (73 aa)) are DNA binding domain. The segment at 74–285 (KMKQAEAEEF…NLLKNGETES (212 aa)) is effector binding domain. Residue tyrosine 102 participates in guanosine 3',5'-bis(diphosphate) binding. Alanine 138, threonine 139, lysine 140, and arginine 160 together coordinate 5-phospho-alpha-D-ribose 1-diphosphate. Guanosine 3',5'-bis(diphosphate) is bound by residues glycine 178 and serine 179. 5 residues coordinate 5-phospho-alpha-D-ribose 1-diphosphate: aspartate 203, aspartate 204, phenylalanine 205, lysine 207, and alanine 208. Lysine 207 is a binding site for guanosine 3',5'-bis(diphosphate). Guanosine 3',5'-bis(diphosphate) contacts are provided by glycine 209, glycine 210, and threonine 211. Threonine 211 contacts 5-phospho-alpha-D-ribose 1-diphosphate.

Belongs to the purine/pyrimidine phosphoribosyltransferase family. PurR subfamily. Homodimer.

With respect to regulation, the binding of PurR to DNA, and therefore the repressor activity, is influenced by interaction with the effector molecules 5-phosphoribosyl 1-pyrophosphate (PRPP) and (p)ppGpp. PRPP binds to PurR and reduces affinity of PurR for DNA, which inhibits the repressor activity and induces transcription of the target genes. On the contrary, (p)ppGpp enhances binding of PurR to DNA and repression of the transcription. PRPP and (p)ppGpp compete for PurR binding and allosteric control of transcription. ppGpp maintains PurR-DNA interaction and prevents PRPP from de-repressing PurR regulation during conditions that lead to (p)ppGpp induction, such as upon amino acid starvation. Its function is as follows. DNA-binding transcriptional repressor that controls the expression of a number of genes involved in the synthesis, metabolism and transport of purines. In response to a signal of excess adenine, represses the transcription of the pur operon, which encodes enzymes of the purine biosynthetic pathway. It also represses the expression of the purA and purR genes. In addition, controls the expression of several other genes or operons, which encode enzymes or transporters playing a role in purine nucleotide metabolism. Acts by binding directly to specific DNA sequences, named PurBoxes, in the upstream control regions of affected genes. Two PurBoxes are required for high-affinity PurR binding. Also responds to amino acid starvation via (p)ppGpp, which strongly increases PurR activity and repression of purine nucleotide biosynthesis genes. In Bacillus subtilis (strain 168), this protein is Purine biosynthesis transcriptional repressor PurR.